Reading from the N-terminus, the 902-residue chain is Androgen receptor (902 aa).

The segment at 1–540 is modulating; that stretch reads MEVQLGLGRV…PIDYYFPPQK (540 aa). Residues 1-569 form an interaction with ZNF318 region; it reads MEVQLGLGRV…GSCKVFFKRA (569 aa). 2 disordered regions span residues 35–146 and 194–224; these read QNPG…LSLL and QQEVISEGSSSVRAREATGAPSSSKDSYLGG. Ser-61 is subject to Phosphoserine; by CDK9. Ser-75 is modified (phosphoserine). Residues 94–103 are compositionally biased toward low complexity; sequence QPSQQQSASE. Composition is skewed to polar residues over residues 196–205 and 213–224; these read EVISEGSSSV and APSSSKDSYLGG. Tyr-221 is modified (phosphotyrosine; by CSK). Ser-254 bears the Phosphoserine mark. Phosphotyrosine; by CSK and TNK2 is present on Tyr-265. Residue Ser-290 is modified to Phosphoserine. Tyr-305, Tyr-344, Tyr-355, and Tyr-360 each carry phosphotyrosine; by CSK. Tyr-361 carries the post-translational modification Phosphotyrosine; by CSK and TNK2. A Glycyl lysine isopeptide (Lys-Gly) (interchain with G-Cter in SUMO) cross-link involves residue Lys-384. At Tyr-391 the chain carries Phosphotyrosine; by CSK. A disordered region spans residues 439–465; it reads EGQLYGPGGGGGSSSPSDAGPVAPYGY. Lys-503 is covalently cross-linked (Glycyl lysine isopeptide (Lys-Gly) (interchain with G-Cter in SUMO)). Tyr-517 and Tyr-534 each carry phosphotyrosine; by CSK. Residues 534–901 are interaction with LPXN; the sequence is YYFPPQKTCL…GKVKPIYFHT (368 aa). Positions 541–614 form a DNA-binding region, nuclear receptor; sequence TCLICGDEAS…AGMTLGARKL (74 aa). 2 consecutive NR C4-type zinc fingers follow at residues 542–562 and 578–602; these read CLICGDEASGCHYGALTCGSC and CASRNDCTIDKFRRKNCPSCRLRKC. The interval 554 to 644 is interaction with HIPK3; it reads YGALTCGSCK…TEDPSQKMTV (91 aa). The interaction with CCAR1 stretch occupies residues 574-901; it reads QKYLCASRND…GKVKPIYFHT (328 aa). The interaction with KAT7 stretch occupies residues 607 to 901; the sequence is MTLGARKLKK…GKVKPIYFHT (295 aa). Ser-633 carries the post-translational modification Phosphoserine. Residues 651-882 enclose the NR LBD domain; that stretch reads ECQPIFLNVL…DFPEMMAEII (232 aa). 17beta-hydroxy-5alpha-androstan-3-one-binding residues include Asn-688 and Arg-735. Residues Lys-828 and Lys-830 each participate in a glycyl lysine isopeptide (Lys-Gly) (interchain with G-Cter in ubiquitin) cross-link. Thr-860 lines the 17beta-hydroxy-5alpha-androstan-3-one pocket. Tyr-898 is modified (phosphotyrosine; by CSK).

This sequence belongs to the nuclear hormone receptor family. NR3 subfamily. Binds DNA as a homodimer. Part of a ternary complex containing AR, EFCAB6/DJBP and PARK7. Interacts with HIPK3 and NR0B2 in the presence of androgen. The ligand binding domain interacts with KAT7/HBO1 in the presence of dihydrotestosterone. Interacts with EFCAB6/DJBP, PQBP1, RANBP9, RBAK, SPDEF, SRA1, TGFB1I1, ZNF318 and RREB1. Interacts with ZMIZ1/ZIMP10 and ZMIZ2/ZMIP7 which both enhance its transactivation activity. Interacts with SLC30A9 and RAD54L2/ARIP4. Interacts with MACROD1 (via macro domain). Interacts via the ligand-binding domain with LXXLL and FXXLF motifs from NCOA1, NCOA2, NCOA3 and MAGEA11. Interacts (via nuclear receptor DNA binding domain and nuclear receptor ligand binding domain) with NCOA4. The AR N-terminal poly-Gln region binds Ran resulting in enhancement of AR-mediated transactivation. Ran-binding decreases as the poly-Gln length increases. Interacts with HIP1 (via coiled coil domain). Interacts (via ligand-binding domain) with TRIM68. Interacts with TNK2. Interacts with USP26. Interacts with RNF6. Interacts (regulated by RNF6 probably through polyubiquitination) with RNF14; regulates AR transcriptional activity. Interacts with PRMT2 and TRIM24. Interacts with RACK1. Interacts with RANBP10; this interaction enhances dihydrotestosterone-induced AR transcriptional activity. Interacts with PRPF6 in a hormone-independent way; this interaction enhances dihydrotestosterone-induced AR transcriptional activity. Interacts with STK4/MST1. Interacts with ZIPK/DAPK3. Interacts with LPXN. Interacts with MAK. Part of a complex containing AR, MAK and NCOA3. Interacts with CRY1. Interacts with CCAR1 and GATA2. Interacts with BUD31. Interacts with ARID4A. Interacts with ARID4B. Interacts (via NR LBD domain) with ZBTB7A; the interaction is direct and androgen-dependent. Interacts with NCOR1. Interacts with NCOR2. Interacts with CRY2 in a ligand-dependent manner. In terms of processing, phosphorylated in prostate cancer cells in response to several growth factors including EGF. Phosphorylation is induced by c-Src kinase (CSK). Tyr-517 is one of the major phosphorylation sites and an increase in phosphorylation and Src kinase activity is associated with prostate cancer progression. Phosphorylation by TNK2 enhances the DNA-binding and transcriptional activity. Phosphorylation at Ser-61 by CDK9 regulates AR promoter selectivity and cell growth. Phosphorylation by PAK6 leads to AR-mediated transcription inhibition. Sumoylated on Lys-384 (major) and Lys-503. Ubiquitinated. Deubiquitinated by USP26. 'Lys-6' and 'Lys-27'-linked polyubiquitination by RNF6 modulates AR transcriptional activity and specificity. Post-translationally, palmitoylated by ZDHHC7 and ZDHHC21. Palmitoylation is required for plasma membrane targeting and for rapid intracellular signaling via ERK and AKT kinases and cAMP generation. In terms of tissue distribution, highest levels in the seminal vesicle, ventral prostate and coagulating gland with lower levels in the kidney and levator ani muscle.

The protein localises to the nucleus. The protein resides in the cytoplasm. Its function is as follows. Steroid hormone receptors are ligand-activated transcription factors that regulate eukaryotic gene expression and affect cellular proliferation and differentiation in target tissues. Transcription factor activity is modulated by bound coactivator and corepressor proteins like ZBTB7A that recruits NCOR1 and NCOR2 to the androgen response elements/ARE on target genes, negatively regulating androgen receptor signaling and androgen-induced cell proliferation. Transcription activation is also down-regulated by NR0B2. Activated, but not phosphorylated, by HIPK3 and ZIPK/DAPK3. This is Androgen receptor (Ar) from Rattus norvegicus (Rat).